The following is a 233-amino-acid chain: Large ribosomal subunit protein uL1 (233 aa).

The protein belongs to the universal ribosomal protein uL1 family. Part of the 50S ribosomal subunit.

Its function is as follows. Binds directly to 23S rRNA. The L1 stalk is quite mobile in the ribosome, and is involved in E site tRNA release. In terms of biological role, protein L1 is also a translational repressor protein, it controls the translation of the L11 operon by binding to its mRNA. This is Large ribosomal subunit protein uL1 from Thermotoga petrophila (strain ATCC BAA-488 / DSM 13995 / JCM 10881 / RKU-1).